The primary structure comprises 297 residues: Tyrosine recombinase XerD (297 aa).

The Core-binding (CB) domain occupies 1 to 86 (MKDSALIELF…AMRKLFQYLY (86 aa)). In terms of domain architecture, Tyr recombinase spans 107-291 (RLPKYLTEQQ…AKERLKHLHE (185 aa)). Active-site residues include arginine 147, lysine 171, histidine 243, arginine 246, and histidine 269. Tyrosine 278 (O-(3'-phospho-DNA)-tyrosine intermediate) is an active-site residue.

Belongs to the 'phage' integrase family. XerD subfamily. In terms of assembly, forms a cyclic heterotetrameric complex composed of two molecules of XerC and two molecules of XerD.

It is found in the cytoplasm. Site-specific tyrosine recombinase, which acts by catalyzing the cutting and rejoining of the recombining DNA molecules. The XerC-XerD complex is essential to convert dimers of the bacterial chromosome into monomers to permit their segregation at cell division. It also contributes to the segregational stability of plasmids. This Pasteurella multocida (strain Pm70) protein is Tyrosine recombinase XerD.